Reading from the N-terminus, the 96-residue chain is Protein Vpr (96 aa).

Residues 1-42 (MEQAPEDQGPQREPYNEWALELLEELKNEAVRHFPRLWLHGL) form a homooligomerization region. Phosphoserine; by host occurs at positions 79 and 96.

It belongs to the HIV-1 VPR protein family. In terms of assembly, homooligomer, may form homodimer. Interacts with p6-gag region of the Pr55 Gag precursor protein through a (Leu-X-X)4 motif near the C-terminus of the P6gag protein. Interacts with host UNG. May interact with host RAD23A/HHR23A. Interacts with host VPRBP/DCAF1, leading to hijack the CUL4A-RBX1-DDB1-DCAF1/VPRBP complex, mediating ubiquitination of host proteins such as TERT and ZGPAT and arrest of the cell cycle in G2 phase. In terms of processing, phosphorylated on several residues by host. These phosphorylations regulate VPR activity for the nuclear import of the HIV-1 pre-integration complex.

The protein resides in the virion. It localises to the host nucleus. Its subcellular location is the host extracellular space. Its function is as follows. During virus replication, may deplete host UNG protein, and incude G2-M cell cycle arrest. Acts by targeting specific host proteins for degradation by the 26S proteasome, through association with the cellular CUL4A-DDB1 E3 ligase complex by direct interaction with host VPRPB/DCAF-1. Cell cycle arrest reportedly occurs within hours of infection and is not blocked by antiviral agents, suggesting that it is initiated by the VPR carried into the virion. Additionally, VPR induces apoptosis in a cell cycle dependent manner suggesting that these two effects are mechanistically linked. Detected in the serum and cerebrospinal fluid of AIDS patient, VPR may also induce cell death to bystander cells. During virus entry, plays a role in the transport of the viral pre-integration (PIC) complex to the host nucleus. This function is crucial for viral infection of non-dividing macrophages. May act directly at the nuclear pore complex, by binding nucleoporins phenylalanine-glycine (FG)-repeat regions. The polypeptide is Protein Vpr (Human immunodeficiency virus type 1 group M subtype G (isolate SE6165) (HIV-1)).